Reading from the N-terminus, the 208-residue chain is Thymidylate kinase (208 aa).

10–17 (GIDGCGKT) is a binding site for ATP.

It belongs to the thymidylate kinase family.

It catalyses the reaction dTMP + ATP = dTDP + ADP. Functionally, phosphorylation of dTMP to form dTDP in both de novo and salvage pathways of dTTP synthesis. This chain is Thymidylate kinase, found in Caldanaerobacter subterraneus subsp. tengcongensis (strain DSM 15242 / JCM 11007 / NBRC 100824 / MB4) (Thermoanaerobacter tengcongensis).